We begin with the raw amino-acid sequence, 332 residues long: tRNA-dihydrouridine(20/20a) synthase (332 aa).

FMN contacts are provided by residues 19 to 21 (PML) and Gln-71. Cys-101 (proton donor) is an active-site residue. FMN contacts are provided by residues Lys-140, His-173, 213 to 215 (NGG), and 235 to 236 (GR).

Belongs to the Dus family. DusA subfamily. Requires FMN as cofactor.

It carries out the reaction 5,6-dihydrouridine(20) in tRNA + NADP(+) = uridine(20) in tRNA + NADPH + H(+). The enzyme catalyses 5,6-dihydrouridine(20) in tRNA + NAD(+) = uridine(20) in tRNA + NADH + H(+). The catalysed reaction is 5,6-dihydrouridine(20a) in tRNA + NADP(+) = uridine(20a) in tRNA + NADPH + H(+). It catalyses the reaction 5,6-dihydrouridine(20a) in tRNA + NAD(+) = uridine(20a) in tRNA + NADH + H(+). In terms of biological role, catalyzes the synthesis of 5,6-dihydrouridine (D), a modified base found in the D-loop of most tRNAs, via the reduction of the C5-C6 double bond in target uridines. Specifically modifies U20 and U20a in tRNAs. The protein is tRNA-dihydrouridine(20/20a) synthase of Salmonella typhimurium (strain LT2 / SGSC1412 / ATCC 700720).